Here is a 322-residue protein sequence, read N- to C-terminus: Malate dehydrogenase (322 aa).

Residues 10 to 15 (GSGQIG) and D34 contribute to the NAD(+) site. Residues R83 and R89 each contribute to the substrate site. NAD(+) contacts are provided by residues N96 and 119-121 (ITN). N121 and R152 together coordinate substrate. H176 (proton acceptor) is an active-site residue.

This sequence belongs to the LDH/MDH superfamily. MDH type 3 family.

It catalyses the reaction (S)-malate + NAD(+) = oxaloacetate + NADH + H(+). Catalyzes the reversible oxidation of malate to oxaloacetate. The polypeptide is Malate dehydrogenase (Bradyrhizobium sp. (strain ORS 278)).